The sequence spans 258 residues: Peptidase inhibitor 15 (258 aa).

A signal peptide spans 1–21; that stretch reads MTIIAAISCVFLFSILCETSA. Positions 22–60 are excised as a propeptide; the sequence is LVLPNSTDLLLSNNNFTDIETALAAHLDSAKIPKARRKR. N-linked (GlcNAc...) asparagine glycans are attached at residues Asn-26, Asn-36, and Asn-124. The region spanning 71-211 is the SCP domain; the sequence is LDYHNQVRGK…RRAVYLVCNY (141 aa).

It belongs to the CRISP family.

The protein resides in the secreted. In terms of biological role, serine protease inhibitor which displays weak inhibitory activity against trypsin. May play a role in facial patterning during embryonic development. In Gallus gallus (Chicken), this protein is Peptidase inhibitor 15 (PI15).